Reading from the N-terminus, the 542-residue chain is Phosphoenolpyruvate carboxykinase (ATP) (542 aa).

Substrate is bound by residues Arg-67, Tyr-208, and Lys-214. ATP-binding positions include Lys-214, His-233, and 249-257; that span reads GLSGTGKTT. Mn(2+) contacts are provided by Lys-214 and His-233. A Mn(2+)-binding site is contributed by Asp-270. ATP contacts are provided by residues Glu-298, Arg-334, 450–451, and Thr-456; that span reads RI. A substrate-binding site is contributed by Arg-334.

It belongs to the phosphoenolpyruvate carboxykinase (ATP) family. As to quaternary structure, monomer. The cofactor is Mn(2+).

The protein resides in the cytoplasm. The catalysed reaction is oxaloacetate + ATP = phosphoenolpyruvate + ADP + CO2. The protein operates within carbohydrate biosynthesis; gluconeogenesis. Its function is as follows. Involved in the gluconeogenesis. Catalyzes the conversion of oxaloacetate (OAA) to phosphoenolpyruvate (PEP) through direct phosphoryl transfer between the nucleoside triphosphate and OAA. The polypeptide is Phosphoenolpyruvate carboxykinase (ATP) (Vibrio vulnificus (strain CMCP6)).